A 354-amino-acid chain; its full sequence is MGPVSLLPKYQKLNTWNGDLAKMTHLQAGLSPETIEKARLELNENPDILHQDIQQVRDMIITRPDIGFLRTDDAFILRFLRARKFHQADAFRLLAQYFQYRQLNLDMFKNFKADDPGIKRALIDGFPGVLENRDHYGRKILLLFAANWDQSRNSFTDILRAILLSLEVLIEDPELQINGFILIIDWSNFSFKQASKLTPSILKLAIEGLQDSFPARFGGVHFVNQPWYIHALYTLIKPFLKDKTRKRIFLHGNNLNSLHQLIHPEFLPSEFGGTLPPYDMGTWARTLLGPDYSDENDYTHTSYNAMHVKHTSSNLERECSPKLMKRSQSVVEAGTLKHEEKGENENTQPLLALD.

Positions 118–279 constitute a CRAL-TRIO domain; that stretch reads IKRALIDGFP…EFGGTLPPYD (162 aa). The tract at residues 333 to 354 is disordered; sequence AGTLKHEEKGENENTQPLLALD. Basic and acidic residues predominate over residues 335-344; sequence TLKHEEKGEN. Residues 345 to 354 are compositionally biased toward polar residues; the sequence is ENTQPLLALD.

In terms of assembly, forms a complex with clathrin heavy chain and gamma-adaptin.

The protein resides in the golgi apparatus. Its subcellular location is the trans-Golgi network membrane. The protein localises to the early endosome membrane. It is found in the cytoplasmic vesicle. It localises to the clathrin-coated vesicle. Functionally, required for normal morphology of late endosomes and/or lysosomes in neurons. Binds phosphatidylinositol 3,5-bisphosphate (PtdIns(3,5)P2). In Pongo abelii (Sumatran orangutan), this protein is Clavesin-1 (CLVS1).